A 282-amino-acid chain; its full sequence is MASSFLPSGATTGDSGGELSSGDDSGDVESLQSPKIEASRSLPELFEKAAEHLQGLVQVASREQLLYLYARYKQVKVGNCNTPKPSFFDFEGKQKWEAWKALGDSSPSQAMQEYIAVVKKLDPSWNPQSPEKKGKEANTGFGGPVVSSLYHEEIIREEDKDIFDYCRENNIDHITKVIKTKNMDVNMKDEEGRTLLHWACDRGHKELVTVLLQYRADINCQDNEGQTALHYAAACEFLDIVELLLQSGADPTLRDQDGCLPEEVTGCKAVTLMLQQHTTGKA.

Residues 1–12 are compositionally biased toward polar residues; it reads MASSFLPSGATT. Residues 1 to 34 form a disordered region; the sequence is MASSFLPSGATTGDSGGELSSGDDSGDVESLQSP. Residues 17–31 show a composition bias toward low complexity; sequence GELSSGDDSGDVESL. Serine 41 is subject to Phosphoserine. Residues 42 to 127 enclose the ACB domain; that stretch reads LPELFEKAAE…VKKLDPSWNP (86 aa). Residues 69–73 and lysine 95 each bind an acyl-CoA; that span reads YARYK. A Phosphoserine modification is found at serine 106. Tyrosine 114 contributes to the an acyl-CoA binding site. 2 ANK repeats span residues 191–220 and 224–253; these read EGRTLLHWACDRGHKELVTVLLQYRADINC and EGQTALHYAAACEFLDIVELLLQSGADPTL.

In terms of assembly, monomer.

The protein resides in the cytoplasm. In terms of biological role, binds long-chain acyl-coenzyme A molecules with a strong preference for unsaturated C18:1-CoA, lower affinity for unsaturated C20:4-CoA, and very weak affinity for saturated C16:0-CoA. Does not bind fatty acids. The protein is Acyl-CoA-binding domain-containing protein 6 (ACBD6) of Bos taurus (Bovine).